The sequence spans 907 residues: Probable ubiquitin-conjugating enzyme E2 24 (907 aa).

Disordered stretches follow at residues 1-23 and 485-509; these read MEMS…EHEE and SSTV…EASS. A compositionally biased stretch (polar residues) spans 495 to 509; sequence QDLSQKISQSDEASS. Residues 662–822 enclose the UBC core domain; that stretch reads SWVKKVQQEW…AFLITCKSMI (161 aa). Cys-748 (glycyl thioester intermediate) is an active-site residue.

It belongs to the ubiquitin-conjugating enzyme family. In terms of assembly, interacts with PHO1. Interacts with NLA. As to expression, expressed in the vascular tissues of cotyledons, leaves, roots, sepals, filaments, anthers and junctions between the inflorescence stems and siliques.

It localises to the golgi apparatus membrane. Its subcellular location is the endoplasmic reticulum membrane. It catalyses the reaction S-ubiquitinyl-[E1 ubiquitin-activating enzyme]-L-cysteine + [E2 ubiquitin-conjugating enzyme]-L-cysteine = [E1 ubiquitin-activating enzyme]-L-cysteine + S-ubiquitinyl-[E2 ubiquitin-conjugating enzyme]-L-cysteine.. It functions in the pathway protein modification; protein ubiquitination. E2 ubiquitin-protein ligase that mediates E1-dependent protein ubiquitination. Mediates PHO1 degradation through multivesicular body-mediated vacuolar proteolysis in response to inorganic phosphate (Pi) availability. Negatively regulates the protein abundance of PHF1 and PHT1s under Pi-sufficient conditions by facilitating the degradation of PHT1 proteins at the endomembrane. Functions cooperatively with NLA to regulate the abundance of the inorganic phosphate (Pi) transporters PHT1-1, PHT1-2 and PHT1-3 in different subcellular compartments. Regulates Pi homeostasis by mediating, cooperatively with NLA, polyubiquitination of PHT1-4 and its targeting for degradation. This is Probable ubiquitin-conjugating enzyme E2 24 from Arabidopsis thaliana (Mouse-ear cress).